A 528-amino-acid polypeptide reads, in one-letter code: UDP-glucuronosyltransferase 2A1 (528 aa).

Positions 1 to 21 (MLKNILLCSLQISLLGMSLGG) are cleaved as a signal peptide. Over 22–494 (NVLIWPMEGS…FQYHSLDVIG (473 aa)) the chain is Extracellular. Residue Asn49 is glycosylated (N-linked (GlcNAc...) asparagine). Residue Lys135 is modified to N6-succinyllysine. Asn314 carries an N-linked (GlcNAc...) asparagine glycan. Residues 495–515 (FLLACVASAILLVAKCCLFIF) traverse the membrane as a helical segment. Topologically, residues 516–528 (QKVGKTGKKKKRD) are cytoplasmic.

Belongs to the UDP-glycosyltransferase family.

It localises to the membrane. The catalysed reaction is glucuronate acceptor + UDP-alpha-D-glucuronate = acceptor beta-D-glucuronoside + UDP + H(+). It catalyses the reaction 16beta,17beta-estriol + UDP-alpha-D-glucuronate = 16beta,17beta-estriol 16-O-(beta-D-glucuronate) + UDP + H(+). The enzyme catalyses 16alpha,17alpha-estriol + UDP-alpha-D-glucuronate = 16alpha,17alpha-estriol 16-O-(beta-D-glucuronate) + UDP + H(+). It carries out the reaction 17alpha-estradiol + UDP-alpha-D-glucuronate = 17alpha-estradiol 17-O-(beta-D-glucuronate) + UDP + H(+). The catalysed reaction is 17alpha-estradiol + UDP-alpha-D-glucuronate = 17alpha-estradiol 3-O-(beta-D-glucuronate) + UDP + H(+). It catalyses the reaction 17beta-estradiol + UDP-alpha-D-glucuronate = 17beta-estradiol 3-O-(beta-D-glucuronate) + UDP + H(+). The enzyme catalyses 17beta-estradiol + UDP-alpha-D-glucuronate = 17beta-estradiol 17-O-(beta-D-glucuronate) + UDP + H(+). It carries out the reaction testosterone + UDP-alpha-D-glucuronate = testosterone 17-O-(beta-D-glucuronate) + UDP + H(+). The catalysed reaction is epitestosterone + UDP-alpha-D-glucuronate = epitestosterone 17-O-(beta-D-glucuronate) + UDP + H(+). It catalyses the reaction lithocholate + UDP-alpha-D-glucuronate = lithocholoyl-3-O-(beta-D-glucuronate) + UDP + H(+). The enzyme catalyses lithocholate + UDP-alpha-D-glucuronate = lithocholoyl-24-O-(beta-D-glucuronate) + UDP. It carries out the reaction deoxycholate + UDP-alpha-D-glucuronate = deoxycholoyl-24-O-(beta-D-glucuronate) + UDP. The catalysed reaction is hyodeoxycholate + UDP-alpha-D-glucuronate = hyodeoxycholate 6-O-(beta-D-glucuronate) + UDP + H(+). It catalyses the reaction hyocholate + UDP-alpha-D-glucuronate = hyocholoyl-24-O-(beta-D-glucuronate) + UDP. Functionally, UDP-glucuronosyltransferase (UGT) that catalyzes phase II biotransformation reactions in which lipophilic substrates are conjugated with glucuronic acid to increase the metabolite's water solubility, thereby facilitating excretion into either the urine or bile. Essential for the elimination and detoxification of drugs, xenobiotics and endogenous compounds. Catalyzes the glucuronidation of endogenous steroid hormones such as androgens (testosterones) and estrogens (estradiol and estriol). Contributes to bile acid (BA) detoxification by catalyzing the glucuronidation of BA substrates, which are natural detergents for dietary lipids absorption. Shows a high affinity to aliphatic odorants such as citronellol as well as olfactory tissue specificity, and therefore may be involved in olfaction. This chain is UDP-glucuronosyltransferase 2A1, found in Mus musculus (Mouse).